The chain runs to 223 residues: MTNQNLNKDKAIVVFSGGQDSTTCLFYAKKHFKDVELVTFNYGQRHDAEIEVATRIAKEQNLKHHILDMSLLSQLTPNALTQHDMDIETGEDGIPNTFVPARNLLFLSFAGALAYQRNAKHIITGVCETDFSGYPDCRDSFIKSMNVTLSLSMDKDFVIHTPLMWLDKAQTWELSDELGVLDYIRHNTLTCYNGVIGDGCGECPACQLRQRGLQHYLEAKGAN.

15–25 contacts ATP; sequence FSGGQDSTTCL. Zn(2+)-binding residues include Cys191, Cys200, Cys203, and Cys206.

Belongs to the QueC family. Homodimer. The cofactor is Zn(2+).

It catalyses the reaction 7-carboxy-7-deazaguanine + NH4(+) + ATP = 7-cyano-7-deazaguanine + ADP + phosphate + H2O + H(+). It participates in purine metabolism; 7-cyano-7-deazaguanine biosynthesis. In terms of biological role, catalyzes the ATP-dependent conversion of 7-carboxy-7-deazaguanine (CDG) to 7-cyano-7-deazaguanine (preQ(0)). The polypeptide is 7-cyano-7-deazaguanine synthase (Staphylococcus haemolyticus (strain JCSC1435)).